Consider the following 98-residue polypeptide: NADH-ubiquinone oxidoreductase chain 4L (98 aa).

3 helical membrane-spanning segments follow: residues 1–21 (MTPTHFTISSAFLLGMMGLAF), 26–46 (LLSALLCLEAMMLALFIALSL), and 59–79 (APMLMLAFSACEASAGLALLV).

This sequence belongs to the complex I subunit 4L family.

It localises to the mitochondrion membrane. The catalysed reaction is a ubiquinone + NADH + 5 H(+)(in) = a ubiquinol + NAD(+) + 4 H(+)(out). Its function is as follows. Core subunit of the mitochondrial membrane respiratory chain NADH dehydrogenase (Complex I) which catalyzes electron transfer from NADH through the respiratory chain, using ubiquinone as an electron acceptor. Part of the enzyme membrane arm which is embedded in the lipid bilayer and involved in proton translocation. This Gadus morhua (Atlantic cod) protein is NADH-ubiquinone oxidoreductase chain 4L (MT-ND4L).